The chain runs to 310 residues: Receptor homology region, transmembrane domain- and RING domain-containing protein 1 (310 aa).

A signal peptide spans 1 to 25; that stretch reads MRLVVSSCLLVAAPFLSSLLRVSLA. Residues 26–168 are Lumenal-facing; sequence TVVLNSISAS…NPPDRGSAWT (143 aa). C65 and C92 are joined by a disulfide. An N-linked (GlcNAc...) asparagine glycan is attached at N75. The 69-residue stretch at 81–149 folds into the PA domain; that stretch reads TTKFALIIRG…VAGEILRKYA (69 aa). Residues 169–189 traverse the membrane as a helical segment; sequence VLAISFFSLLLIVTFLLIAFF. Residues 190-310 lie on the Cytoplasmic side of the membrane; that stretch reads APRHWTQWRG…FAFAQSSQSR (121 aa). The RING-type; atypical zinc-finger motif lies at 232–274; the sequence is CAICLEDYRFGESLRLLPCQHAFHLNCIDSWLTKWGTSCPVCK. Basic and acidic residues predominate over residues 284-293; that stretch reads SEVHKRESPR. Residues 284–310 form a disordered region; sequence SEVHKRESPRTDTSTSRFAFAQSSQSR. Positions 294 to 310 are enriched in polar residues; that stretch reads TDTSTSRFAFAQSSQSR.

As to expression, expressed in leaves, stems, flowers and siliques.

The protein localises to the prevacuolar compartment membrane. Its subcellular location is the protein storage vacuole membrane. It localises to the golgi apparatus membrane. Involved in the trafficking of vacuolar proteins. Functions probably as a sorting receptor for protein trafficking to the protein storage vacuole (PSV) by binding the C-terminal vacuolar sorting determinant (VSD) of vacuolar-sorted proteins. The protein is Receptor homology region, transmembrane domain- and RING domain-containing protein 1 (RMR1) of Arabidopsis thaliana (Mouse-ear cress).